The sequence spans 483 residues: MKFELNDKKLDAIKADFELVFIQDKNLKIFNKEKDFFKLNNYKGEGALLDLNNKKLYLELKSLAYEDIRLSLCTAYKTLEKLNIKSVKLPSIIGDCVVRSFASLVEGVLFGAYKFDKYKSEKKTSTLEKFIISNEELNGKKFNKDEAKIGLERGEILANATNFTKNIVNEIPEIYTPLKMAEDAQNLAKENKNIICKIYDEKFLAKEKMNAFLAVNHASVHPPRLIHLSYKAKNAKKRVVFVGKGLTYDSGGLSLKPADFMLTMKADKSGAAAAMGIIKAVAELALDLEVHCILGATENMIGGNAYKPDDVLISREGVSIEVRNTDAEGRLVLADCLSFAQDLKPDLLIDMATLTGACVVGLGEFTSAIMGNNEELQNDFYLSSKKSGEYTTILHFNPHLRELIKSNIADVSNTASSRYGGAITAGLFLDKFIRKEYKDKWLHLDIAGPAYTEKSWGYSSFGAGGAGVRMCVNYLIQILRKAK.

Mn(2+) is bound by residues Lys-244 and Asp-249. The active site involves Lys-256. Mn(2+)-binding residues include Asp-267, Asp-326, and Glu-328. Arg-330 is an active-site residue.

Belongs to the peptidase M17 family. Mn(2+) is required as a cofactor.

It is found in the cytoplasm. It carries out the reaction Release of an N-terminal amino acid, Xaa-|-Yaa-, in which Xaa is preferably Leu, but may be other amino acids including Pro although not Arg or Lys, and Yaa may be Pro. Amino acid amides and methyl esters are also readily hydrolyzed, but rates on arylamides are exceedingly low.. The catalysed reaction is Release of an N-terminal amino acid, preferentially leucine, but not glutamic or aspartic acids.. Functionally, presumably involved in the processing and regular turnover of intracellular proteins. Catalyzes the removal of unsubstituted N-terminal amino acids from various peptides. The sequence is that of Probable cytosol aminopeptidase from Campylobacter jejuni subsp. jejuni serotype O:2 (strain ATCC 700819 / NCTC 11168).